Reading from the N-terminus, the 273-residue chain is MTLTKRVIPCIDVDLDDDGEPAVYTGVNFEELAYTGDPVEMAKRYNEAGADEFVFLDITASAEGRETMLDTVSAVADEVFIPLTVGGGIRDTDDIRETLRAGADKVSINSGAIADPSLVDRGAKAFGSQCIVISVDARRRFDEQGQHYTQVDGESCWFECTVHGGREGTGMDAIEWVQEAQRRGAGELFVNSIDADGTQDGYDVPLTAAVCDAVSTPVIASSGCGAPGDMADAYDAGADAALAASIFHFDEYSIAETKETLADAGYPIRAPDA.

Active-site residues include Asp12 and Asp136.

Belongs to the HisA/HisF family. In terms of assembly, heterodimer of HisH and HisF.

It localises to the cytoplasm. The catalysed reaction is 5-[(5-phospho-1-deoxy-D-ribulos-1-ylimino)methylamino]-1-(5-phospho-beta-D-ribosyl)imidazole-4-carboxamide + L-glutamine = D-erythro-1-(imidazol-4-yl)glycerol 3-phosphate + 5-amino-1-(5-phospho-beta-D-ribosyl)imidazole-4-carboxamide + L-glutamate + H(+). Its pathway is amino-acid biosynthesis; L-histidine biosynthesis; L-histidine from 5-phospho-alpha-D-ribose 1-diphosphate: step 5/9. Its function is as follows. IGPS catalyzes the conversion of PRFAR and glutamine to IGP, AICAR and glutamate. The HisF subunit catalyzes the cyclization activity that produces IGP and AICAR from PRFAR using the ammonia provided by the HisH subunit. The sequence is that of Imidazole glycerol phosphate synthase subunit HisF from Halobacterium salinarum (strain ATCC 29341 / DSM 671 / R1).